Reading from the N-terminus, the 315-residue chain is Ribosomal RNA large subunit methyltransferase F (315 aa).

It belongs to the methyltransferase superfamily. METTL16/RlmF family.

The protein resides in the cytoplasm. The enzyme catalyses adenosine(1618) in 23S rRNA + S-adenosyl-L-methionine = N(6)-methyladenosine(1618) in 23S rRNA + S-adenosyl-L-homocysteine + H(+). In terms of biological role, specifically methylates the adenine in position 1618 of 23S rRNA. This Aeromonas salmonicida (strain A449) protein is Ribosomal RNA large subunit methyltransferase F.